Reading from the N-terminus, the 428-residue chain is Growth/differentiation factor 2 (428 aa).

Positions 1 to 22 (MSPGAFRVALLPLFLLVCVTQQ) are cleaved as a signal peptide. A propeptide spanning residues 23–318 (KPLQNWEQAS…VGPLLARRKR (296 aa)) is cleaved from the precursor. N-linked (GlcNAc...) asparagine glycosylation is found at asparagine 70 and asparagine 135. A disulfide bridge connects residues cysteine 155 and cysteine 236. N-linked (GlcNAc...) asparagine glycosylation is present at asparagine 262. 3 disulfides stabilise this stretch: cysteine 326/cysteine 392, cysteine 355/cysteine 425, and cysteine 359/cysteine 427. The segment at 401 to 415 (SILYKDDMGVPTLKY) is interaction with ENG.

It belongs to the TGF-beta family. In terms of assembly, homodimer; disulfide-linked. Detected in extracellular fluid as mature homodimer, and in complex with its propeptide. Interacts with ACVRL1, BMPR2 and ACVR2B with high affinity (in vitro). Identified in a complex with ACVRL1 and ACVR2B. Has ten times lower affinity for ACVR2A (in vitro). Interacts with ENG, forming a heterotetramer with a 2:2 stoichiometry. Can form a heteromeric complex with ENG and ACVRL1. Interacts with type I receptor ACVR1. A reversible disulfide bond can be formed between the two subunits in the homodimer; this has no effect on GDF2 activity.

Its subcellular location is the secreted. In terms of biological role, potent circulating inhibitor of angiogenesis. Signals through the type I activin receptor ACVRL1 but not other Alks. Signaling through SMAD1 in endothelial cells requires TGF-beta coreceptor endoglin/ENG. The sequence is that of Growth/differentiation factor 2 (Gdf2) from Mus musculus (Mouse).